A 257-amino-acid chain; its full sequence is Protein-tyrosine-phosphatase IBR5 (257 aa).

The region spanning 49-185 (FPSEILPEFL…LQEFEQGIFG (137 aa)) is the Tyrosine-protein phosphatase domain. Cysteine 129 functions as the Phosphocysteine intermediate in the catalytic mechanism. Residues 235-257 (QEFTFGATPPKPTTGGDIAMDGS) form a disordered region.

It belongs to the protein-tyrosine phosphatase family. Interacts with SKP1A/ASK1 and with MPK12. In terms of tissue distribution, expressed in root tips and vasculature, cotyledons, stems, leaves vasculature and hydathodes, flowers, siliques, and seeds.

Its subcellular location is the nucleus. The enzyme catalyses O-phospho-L-tyrosyl-[protein] + H2O = L-tyrosyl-[protein] + phosphate. In terms of biological role, required for the transduction of auxin and abscisic acid (ABA) signaling pathways. Dephosphorylates and inactivates the MAP kinase MPK12. The chain is Protein-tyrosine-phosphatase IBR5 (IBR5) from Arabidopsis thaliana (Mouse-ear cress).